The chain runs to 413 residues: von Willebrand factor A domain-containing protein 1 (413 aa).

The N-terminal stretch at 1-20 is a signal peptide; sequence MLPWTVIGLALSLRLARSGA. The 180-residue stretch at 32–211 folds into the VWFA domain; that stretch reads DLLFLLDSSA…ALRGSILDAM (180 aa). Residues Ser72, Ser78, and Ser91 each carry the phosphoserine modification. 2 consecutive Fibronectin type-III domains span residues 212-302 and 305-395; these read WPQQ…TLPE and GPEL…TPEG. A glycan (N-linked (GlcNAc...) asparagine) is linked at Asn262. The disordered stretch occupies residues 385–413; it reads ALSAKACTPEGERSRAPRPQPQRTGGREP.

In terms of assembly, homodimer or homomultimer; disulfide-linked. Interacts with HSPG2. Post-translationally, N-glycosylated.

The protein localises to the secreted. The protein resides in the extracellular space. Its subcellular location is the extracellular matrix. It localises to the basement membrane. In terms of biological role, promotes matrix assembly. Involved in the organization of skeletal muscles and in the formation of neuromuscular junctions. The protein is von Willebrand factor A domain-containing protein 1 (VWA1) of Bos taurus (Bovine).